A 241-amino-acid chain; its full sequence is MPINRPNLNLHIPPLNIVAAYDGAEIPSTNKHLKNNFNSLHNQMRKMPLSHFKEALDVPDYSGMRQSGFFAMSQGFQLNNHGYDVFIHARRESPQSLGKFAGDKFHISVLRDMVPQAFQALSGLLFSEDSPVDKWKVTDMEKVVQQARVSLGAQFTLYIKPDQENSQYSASFLHKTRQFIECLESRLSENGVISGQCPESDVHPENWKYLSYRNELRSGRDGGEMQRQALREEPFYRLMTE.

Histidine 106 (proton donor) is an active-site residue. Lysine 136 functions as the Proton acceptor in the catalytic mechanism.

This sequence belongs to the phosphothreonine lyase family.

The protein localises to the secreted. In terms of biological role, secreted effector that irreversibly inactivates host MAP kinases by catalyzing the dephosphorylation of the phosphothreonine residue in the pT-X-pY motif present in MAPKs, via a beta-elimination reaction leading to a dehydrobutyrine residue. The sequence is that of MAPK phosphothreonine lyase (spvC) from Salmonella choleraesuis (strain SC-B67).